A 390-amino-acid chain; its full sequence is Queuine tRNA-ribosyltransferase (390 aa).

Asp-92 serves as the catalytic Proton acceptor. Residues 92 to 96 (DSGGF), Asp-146, Gln-195, and Gly-222 contribute to the substrate site. The tract at residues 253-259 (GVGTPED) is RNA binding. The active-site Nucleophile is Asp-272. Residues 277–281 (TRNAR) are RNA binding; important for wobble base 34 recognition. Residues Cys-310, Cys-312, Cys-315, and His-354 each contribute to the Zn(2+) site.

It belongs to the queuine tRNA-ribosyltransferase family. In terms of assembly, homodimer. Within each dimer, one monomer is responsible for RNA recognition and catalysis, while the other monomer binds to the replacement base PreQ1. Zn(2+) serves as cofactor.

The enzyme catalyses 7-aminomethyl-7-carbaguanine + guanosine(34) in tRNA = 7-aminomethyl-7-carbaguanosine(34) in tRNA + guanine. Its pathway is tRNA modification; tRNA-queuosine biosynthesis. Its function is as follows. Catalyzes the base-exchange of a guanine (G) residue with the queuine precursor 7-aminomethyl-7-deazaguanine (PreQ1) at position 34 (anticodon wobble position) in tRNAs with GU(N) anticodons (tRNA-Asp, -Asn, -His and -Tyr). Catalysis occurs through a double-displacement mechanism. The nucleophile active site attacks the C1' of nucleotide 34 to detach the guanine base from the RNA, forming a covalent enzyme-RNA intermediate. The proton acceptor active site deprotonates the incoming PreQ1, allowing a nucleophilic attack on the C1' of the ribose to form the product. After dissociation, two additional enzymatic reactions on the tRNA convert PreQ1 to queuine (Q), resulting in the hypermodified nucleoside queuosine (7-(((4,5-cis-dihydroxy-2-cyclopenten-1-yl)amino)methyl)-7-deazaguanosine). In Delftia acidovorans (strain DSM 14801 / SPH-1), this protein is Queuine tRNA-ribosyltransferase.